Reading from the N-terminus, the 64-residue chain is Photosystem II reaction center protein J (64 aa).

A helical membrane pass occupies residues 35–55 (LWLVATAGGIAVIFVLGIFFY).

This sequence belongs to the PsbJ family. As to quaternary structure, PSII is composed of 1 copy each of membrane proteins PsbA, PsbB, PsbC, PsbD, PsbE, PsbF, PsbH, PsbI, PsbJ, PsbK, PsbL, PsbM, PsbT, PsbX, PsbY, Psb30/Ycf12, peripheral proteins PsbO, CyanoQ (PsbQ), PsbU, PsbV and a large number of cofactors. It forms dimeric complexes.

It localises to the cellular thylakoid membrane. Functionally, one of the components of the core complex of photosystem II (PSII). PSII is a light-driven water:plastoquinone oxidoreductase that uses light energy to abstract electrons from H(2)O, generating O(2) and a proton gradient subsequently used for ATP formation. It consists of a core antenna complex that captures photons, and an electron transfer chain that converts photonic excitation into a charge separation. The polypeptide is Photosystem II reaction center protein J (Prochlorococcus marinus (strain MIT 9515)).